Here is a 206-residue protein sequence, read N- to C-terminus: Guanylate kinase (206 aa).

Positions 6-184 constitute a Guanylate kinase-like domain; it reads GTLYIISAPS…ALGDLKAIFR (179 aa). Residue 13-20 participates in ATP binding; sequence APSGAGKS.

The protein belongs to the guanylate kinase family.

It localises to the cytoplasm. The enzyme catalyses GMP + ATP = GDP + ADP. Its function is as follows. Essential for recycling GMP and indirectly, cGMP. The protein is Guanylate kinase of Pseudomonas fluorescens (strain ATCC BAA-477 / NRRL B-23932 / Pf-5).